The sequence spans 357 residues: Acyl-coenzyme A diphosphatase NUDT19 (357 aa).

The Nudix hydrolase domain occupies 10-242; it reads AATVMLAAGW…IWLAPPQFYE (233 aa). The tract at residues 72-93 is disordered; that stretch reads PRFGLGPEPPRQPPFPGLSHGD. The segment covering 78–87 has biased composition (pro residues); sequence PEPPRQPPFP. Positions 97 to 118 match the Nudix box motif; it reads AALPDDVALRICAIREAFEEAG. Residues glutamate 112 and glutamate 116 each coordinate Mg(2+). N6-succinyllysine is present on lysine 300. Positions 355-357 match the Microbody targeting signal motif; sequence AHL.

It belongs to the Nudix hydrolase family. In terms of assembly, monomer. It depends on Mg(2+) as a cofactor. Requires Mn(2+) as cofactor. Highly expressed in the kidneys, with lower levels in skeletal muscle and brain (at protein level).

It is found in the peroxisome. The catalysed reaction is an acyl-CoA + H2O = an acyl-4'-phosphopantetheine + adenosine 3',5'-bisphosphate + 2 H(+). It catalyses the reaction CoA + H2O = (R)-4'-phosphopantetheine + adenosine 3',5'-bisphosphate + 2 H(+). It carries out the reaction hexanoyl-CoA + H2O = hexanoyl-4'-phosphopantetheine + adenosine 3',5'-bisphosphate + 2 H(+). The enzyme catalyses octanoyl-CoA + H2O = S-octanoyl-4'-phosphopantetheine + adenosine 3',5'-bisphosphate + 2 H(+). The catalysed reaction is butanoyl-CoA + H2O = S-butanoyl-4'-phosphopantetheine + adenosine 3',5'-bisphosphate + 2 H(+). It catalyses the reaction propanoyl-CoA + H2O = propanoyl-4'-phosphopantetheine + adenosine 3',5'-bisphosphate + 2 H(+). It carries out the reaction malonyl-CoA + H2O = malonyl-4'-phosphopantetheine + adenosine 3',5'-bisphosphate + 2 H(+). The enzyme catalyses succinyl-CoA + H2O = succinyl-4'-phosphopantetheine + adenosine 3',5'-bisphosphate + 2 H(+). The catalysed reaction is choloyl-CoA + H2O = S-choloyl-4'-phosphopantetheine + adenosine 3',5'-bisphosphate + 2 H(+). It catalyses the reaction 4,8-dimethylnonanoyl-CoA + H2O = S-(4,8-dimethylnonanoyl)-4'-phosphopantetheine + adenosine 3',5'-bisphosphate + 2 H(+). It carries out the reaction (9Z,12Z,15Z)-octadecatrienoyl-CoA + H2O = S-(9Z,12Z,15Z-octadecatrienoyl)-4'-phosphopantetheine + adenosine 3',5'-bisphosphate + 2 H(+). The enzyme catalyses (9Z,12Z)-octadecadienoyl-CoA + H2O = S-(9Z,12Z-octadecadienoyl)-4'-phosphopantetheine + adenosine 3',5'-bisphosphate + 2 H(+). The catalysed reaction is (9Z)-hexadecenoyl-CoA + H2O = S-(9Z-hexadecenoyl)-4'-phosphopantetheine + adenosine 3',5'-bisphosphate + 2 H(+). It catalyses the reaction (9Z)-tetradecenoyl-CoA + H2O = S-(9Z-tetradecenoyl)-4'-phosphopantetheine + adenosine 3',5'-bisphosphate + 2 H(+). It carries out the reaction (6Z)-octenoyl-CoA + H2O = S-(6Z-octenoyl)-4'-phosphopantetheine + adenosine 3',5'-bisphosphate + 2 H(+). The enzyme catalyses hexadecanoyl-CoA + H2O = S-hexadecanoyl-4'-phosphopantetheine + adenosine 3',5'-bisphosphate + 2 H(+). The catalysed reaction is tetradecanoyl-CoA + H2O = tetradecanoyl-4'-phosphopantetheine + adenosine 3',5'-bisphosphate + 2 H(+). It catalyses the reaction dodecanoyl-CoA + H2O = S-dodecanoyl-4'-phosphopantetheine + adenosine 3',5'-bisphosphate + 2 H(+). It carries out the reaction a 5'-end CoA-ribonucleoside in mRNA + H2O = a 5'-end phospho-adenosine-phospho-ribonucleoside in mRNA + (R)-4'-phosphopantetheine + 2 H(+). Inhibited by chenodeoxycholic acid (CDCA) and its conjugated derivatives, taurochenodeoxycholic acid and glycochenodeoxycholic acid. Inhibited by fluoride. Functionally, fatty acyl-coenzyme A (CoA) diphosphatase that hydrolyzes fatty acyl-CoA to yield acyl-4'-phosphopantetheine and adenosine 3',5'-bisphosphate. Mediates the hydrolysis of a wide range of CoA esters, including choloyl-CoA and branched-chain fatty-acyl-CoA esters and at low substrate concentrations medium and long-chain fatty-acyl-CoA esters are the primary substrates. Highest activity seen with medium-chain acyl-CoA esters and higher rates of activity seen with the unsaturated acyl-CoA esters compared with the saturated esters. Exhibits decapping activity towards dpCoA-capped RNAs in vitro. In Mus musculus (Mouse), this protein is Acyl-coenzyme A diphosphatase NUDT19 (Nudt19).